Here is a 335-residue protein sequence, read N- to C-terminus: Probable peroxidase 26 (335 aa).

Residues 1–18 (MVMIHIFLTVMVVGGVSL) form the signal peptide. 4 cysteine pairs are disulfide-bonded: cysteine 46–cysteine 122, cysteine 79–cysteine 84, cysteine 128–cysteine 331, and cysteine 205–cysteine 237. Arginine 73 is an active-site residue. Residues aspartate 78, valine 81, glycine 83, aspartate 85, and serine 87 each coordinate Ca(2+). Proline 168 is a binding site for substrate. Residue histidine 198 participates in heme b binding. Residue serine 199 coordinates Ca(2+). N-linked (GlcNAc...) asparagine glycosylation occurs at asparagine 216. Residues aspartate 255 and serine 258 each contribute to the Ca(2+) site. N-linked (GlcNAc...) asparagine glycans are attached at residues asparagine 259 and asparagine 273.

Belongs to the peroxidase family. Classical plant (class III) peroxidase subfamily. The cofactor is heme b. It depends on Ca(2+) as a cofactor.

The protein resides in the secreted. It carries out the reaction 2 a phenolic donor + H2O2 = 2 a phenolic radical donor + 2 H2O. Functionally, removal of H(2)O(2), oxidation of toxic reductants, biosynthesis and degradation of lignin, suberization, auxin catabolism, response to environmental stresses such as wounding, pathogen attack and oxidative stress. The enzyme activity has to be proved. The chain is Probable peroxidase 26 (PER26) from Arabidopsis thaliana (Mouse-ear cress).